Here is a 316-residue protein sequence, read N- to C-terminus: Ribosomal RNA small subunit methyltransferase H (316 aa).

S-adenosyl-L-methionine contacts are provided by residues 32 to 34 (AGH), Asp-52, Phe-79, Asp-100, and Gln-107.

It belongs to the methyltransferase superfamily. RsmH family.

The protein resides in the cytoplasm. The catalysed reaction is cytidine(1402) in 16S rRNA + S-adenosyl-L-methionine = N(4)-methylcytidine(1402) in 16S rRNA + S-adenosyl-L-homocysteine + H(+). Functionally, specifically methylates the N4 position of cytidine in position 1402 (C1402) of 16S rRNA. The protein is Ribosomal RNA small subunit methyltransferase H of Lysinibacillus sphaericus (strain C3-41).